A 359-amino-acid chain; its full sequence is Histidinol-phosphate aminotransferase (359 aa).

Lys217 is subject to N6-(pyridoxal phosphate)lysine.

This sequence belongs to the class-II pyridoxal-phosphate-dependent aminotransferase family. Histidinol-phosphate aminotransferase subfamily. Homodimer. The cofactor is pyridoxal 5'-phosphate.

The enzyme catalyses L-histidinol phosphate + 2-oxoglutarate = 3-(imidazol-4-yl)-2-oxopropyl phosphate + L-glutamate. Its pathway is amino-acid biosynthesis; L-histidine biosynthesis; L-histidine from 5-phospho-alpha-D-ribose 1-diphosphate: step 7/9. The protein is Histidinol-phosphate aminotransferase of Roseobacter denitrificans (strain ATCC 33942 / OCh 114) (Erythrobacter sp. (strain OCh 114)).